The following is a 280-amino-acid chain: Para-Rep C2 (280 aa).

Residues 1-97 (MARRYCFTLN…ETLISEIGIP (97 aa)) form the CRESS-DNA virus Rep endonuclease domain. Residues 6-9 (CFTL) carry the RCR-1 motif. A divalent metal cation is bound by residues E37 and H45. The short motif at 45-47 (HLQ) is the RCR-2 element. The Nuclear localization signal motif lies at 54–75 (NKIRLGGLKKKFGNRAHWEIAR). Y84 acts as the For DNA cleavage activity in catalysis. The RCR-3 signature appears at 84-87 (YCCK). Positions 97–103 (PVMKGSN) match the Nuclear localization signal motif. 172–180 (GSDGGEGKT) contacts ATP.

The protein belongs to the nanoviridea/circoviridae replication-associated protein family. In terms of assembly, homooligomer (Potential). Rep binds to repeated DNA motifs (iterons). The cofactor is Mg(2+). It depends on Mn(2+) as a cofactor.

The protein resides in the host nucleus. The catalysed reaction is ATP + H2O = ADP + phosphate + H(+). Its function is as follows. Initiates and terminates the replication only of its own subviral DNA molecule. The closed circular ssDNA genome is first converted to a superhelical dsDNA. Rep binds a specific hairpin at the genome origin of replication. Introduces an endonucleolytic nick within the intergenic region of the genome, thereby initiating the rolling circle replication (RCR). Following cleavage, binds covalently to the 5'-phosphate of DNA as a tyrosyl ester. The cleavage gives rise to a free 3'-OH that serves as a primer for the cellular DNA polymerase. The polymerase synthesizes the (+) strand DNA by rolling circle mechanism. After one round of replication, a Rep-catalyzed nucleotidyl transfer reaction releases a circular single-stranded virus genome, thereby terminating the replication. Displays origin-specific DNA cleavage, nucleotidyl transferase, ATPase and helicase activities. This is Para-Rep C2 (C2) from Subterranean clover stunt C2 alphasatellite (SCSC2A).